A 237-amino-acid polypeptide reads, in one-letter code: 1-(5-phosphoribosyl)-5-[(5-phosphoribosylamino)methylideneamino] imidazole-4-carboxamide isomerase (237 aa).

The Proton acceptor role is filled by aspartate 8. Catalysis depends on aspartate 129, which acts as the Proton donor.

This sequence belongs to the HisA/HisF family.

The protein resides in the cytoplasm. The catalysed reaction is 1-(5-phospho-beta-D-ribosyl)-5-[(5-phospho-beta-D-ribosylamino)methylideneamino]imidazole-4-carboxamide = 5-[(5-phospho-1-deoxy-D-ribulos-1-ylimino)methylamino]-1-(5-phospho-beta-D-ribosyl)imidazole-4-carboxamide. The protein operates within amino-acid biosynthesis; L-histidine biosynthesis; L-histidine from 5-phospho-alpha-D-ribose 1-diphosphate: step 4/9. This Roseiflexus sp. (strain RS-1) protein is 1-(5-phosphoribosyl)-5-[(5-phosphoribosylamino)methylideneamino] imidazole-4-carboxamide isomerase.